A 392-amino-acid polypeptide reads, in one-letter code: Phospho-N-acetylmuramoyl-pentapeptide-transferase (392 aa).

10 helical membrane passes run 29–49 (AVMA…FVIR), 76–96 (TMGG…WFDL), 100–120 (FVWI…ADDW), 137–157 (YLWQ…SISE), 193–213 (ISYP…IVGS), 225–245 (GLAI…AYVT), 262–282 (SGEL…FLWF), 289–309 (VFMG…IAVI), 314–334 (IVLA…MMQV), and 369–389 (QVVV…LSTL).

It belongs to the glycosyltransferase 4 family. MraY subfamily. It depends on Mg(2+) as a cofactor.

It is found in the cell inner membrane. The enzyme catalyses UDP-N-acetyl-alpha-D-muramoyl-L-alanyl-gamma-D-glutamyl-meso-2,6-diaminopimeloyl-D-alanyl-D-alanine + di-trans,octa-cis-undecaprenyl phosphate = di-trans,octa-cis-undecaprenyl diphospho-N-acetyl-alpha-D-muramoyl-L-alanyl-D-glutamyl-meso-2,6-diaminopimeloyl-D-alanyl-D-alanine + UMP. It participates in cell wall biogenesis; peptidoglycan biosynthesis. Functionally, catalyzes the initial step of the lipid cycle reactions in the biosynthesis of the cell wall peptidoglycan: transfers peptidoglycan precursor phospho-MurNAc-pentapeptide from UDP-MurNAc-pentapeptide onto the lipid carrier undecaprenyl phosphate, yielding undecaprenyl-pyrophosphoryl-MurNAc-pentapeptide, known as lipid I. This is Phospho-N-acetylmuramoyl-pentapeptide-transferase from Polaromonas sp. (strain JS666 / ATCC BAA-500).